The chain runs to 429 residues: MIELDINASDKSLSHRAVIFSLLAQKPCFVRNFLMGEDCLSSLEIAQNLGAKVENTAKNSFKITPPTAIKEPNKILNCNNSGTSMRLYSGLLSAQKGLFVLSGDNSLNARPMKRIIEPLKAFGAKILGREDNHFAPLAILGSPLKACDYESPIASAQVKSAFILSALQAQGISAYKENELSRNHTEIMLKSLGADIQNQNGVLMISPLEKPLEAFDFTIANDPSSAFFFALACAITPKSRLLLKNVLLNPTRIEAFEVLKKMGASIEYAIQSKDLEIIGDIYIEHAPLKAISIDQNIASLIDEIPALSIAMLFAKGKSMVKNAKDLRSKESDRIKAVVSNLKALGIECEEFEDGFYIEGLEDISPLKQHLSQKKPPLIQSFNDHRIAMSFAILTLALPLEIDNLECANISFPQFKRLLNQFKKGSFNGN.

3 residues coordinate 3-phosphoshikimate: Lys11, Ser12, and Arg16. Residue Lys11 participates in phosphoenolpyruvate binding. Gly82 and Arg110 together coordinate phosphoenolpyruvate. 3-phosphoshikimate contacts are provided by Ser155, Gln157, Asp302, and Lys329. Position 157 (Gln157) interacts with phosphoenolpyruvate. Asp302 functions as the Proton acceptor in the catalytic mechanism. Positions 333 and 385 each coordinate phosphoenolpyruvate.

This sequence belongs to the EPSP synthase family. Monomer.

Its subcellular location is the cytoplasm. It carries out the reaction 3-phosphoshikimate + phosphoenolpyruvate = 5-O-(1-carboxyvinyl)-3-phosphoshikimate + phosphate. It functions in the pathway metabolic intermediate biosynthesis; chorismate biosynthesis; chorismate from D-erythrose 4-phosphate and phosphoenolpyruvate: step 6/7. Functionally, catalyzes the transfer of the enolpyruvyl moiety of phosphoenolpyruvate (PEP) to the 5-hydroxyl of shikimate-3-phosphate (S3P) to produce enolpyruvyl shikimate-3-phosphate and inorganic phosphate. The sequence is that of 3-phosphoshikimate 1-carboxyvinyltransferase from Helicobacter pylori (strain G27).